A 286-amino-acid polypeptide reads, in one-letter code: Lipid phosphate phosphatase epsilon 2, chloroplastic (286 aa).

Residues 1–60 (MAASSSSLLLLHKPTYNFHFAASSVPTYINSARFRISSSIFPLDRRRRRRIWSVSGFKSM) constitute a chloroplast transit peptide. Transmembrane regions (helical) follow at residues 133–149 (LWAVIGSVSNSVLSVAL), 173–193 (AQSISFISVFSVFSVMEWLGT), 194–214 (NVLSLFLSGFILALGSYFTWL), 226–246 (VVVGAIVGSVYSTLWYVTWNS), and 260–280 (IALFLVAAASALGFAVYVLLN).

It belongs to the PA-phosphatase related phosphoesterase family. In terms of tissue distribution, expressed in root tips, root branch points, cotyledons and leaves.

It localises to the plastid. The protein localises to the chloroplast inner membrane. With respect to regulation, inhibited by Mg(2+). Exhibits phosphatidate phosphatase (PAP) activity in vitro. May play a secondary role as PAP in plastids. This chain is Lipid phosphate phosphatase epsilon 2, chloroplastic (LPPE2), found in Arabidopsis thaliana (Mouse-ear cress).